We begin with the raw amino-acid sequence, 717 residues long: DNA ligase (717 aa).

NAD(+)-binding positions include 44 to 48, 93 to 94, and Glu-127; these read DADYD and SL. Lys-129 functions as the N6-AMP-lysine intermediate in the catalytic mechanism. Arg-150, Glu-186, Lys-302, and Lys-326 together coordinate NAD(+). Residues Cys-431, Cys-434, Cys-455, and Cys-461 each coordinate Zn(2+). Positions 639 to 717 constitute a BRCT domain; sequence ATDSPVAGKT…EDEWLALIGG (79 aa).

The protein belongs to the NAD-dependent DNA ligase family. LigA subfamily. Mg(2+) is required as a cofactor. Requires Mn(2+) as cofactor.

The enzyme catalyses NAD(+) + (deoxyribonucleotide)n-3'-hydroxyl + 5'-phospho-(deoxyribonucleotide)m = (deoxyribonucleotide)n+m + AMP + beta-nicotinamide D-nucleotide.. Functionally, DNA ligase that catalyzes the formation of phosphodiester linkages between 5'-phosphoryl and 3'-hydroxyl groups in double-stranded DNA using NAD as a coenzyme and as the energy source for the reaction. It is essential for DNA replication and repair of damaged DNA. This Sinorhizobium medicae (strain WSM419) (Ensifer medicae) protein is DNA ligase.